Reading from the N-terminus, the 492-residue chain is N-succinylglutamate 5-semialdehyde dehydrogenase (492 aa).

220–225 contributes to the NAD(+) binding site; sequence GSASTG. Residues Glu-243 and Cys-277 contribute to the active site.

It belongs to the aldehyde dehydrogenase family. AstD subfamily.

It catalyses the reaction N-succinyl-L-glutamate 5-semialdehyde + NAD(+) + H2O = N-succinyl-L-glutamate + NADH + 2 H(+). It participates in amino-acid degradation; L-arginine degradation via AST pathway; L-glutamate and succinate from L-arginine: step 4/5. Functionally, catalyzes the NAD-dependent reduction of succinylglutamate semialdehyde into succinylglutamate. The chain is N-succinylglutamate 5-semialdehyde dehydrogenase from Salmonella schwarzengrund (strain CVM19633).